The following is a 309-amino-acid chain: Ribonuclease Z (309 aa).

Residues H64, H66, D68, H69, H141, D209, and H267 each contribute to the Zn(2+) site. Catalysis depends on D68, which acts as the Proton acceptor.

Belongs to the RNase Z family. In terms of assembly, homodimer. It depends on Zn(2+) as a cofactor.

The enzyme catalyses Endonucleolytic cleavage of RNA, removing extra 3' nucleotides from tRNA precursor, generating 3' termini of tRNAs. A 3'-hydroxy group is left at the tRNA terminus and a 5'-phosphoryl group is left at the trailer molecule.. Zinc phosphodiesterase, which displays some tRNA 3'-processing endonuclease activity. Probably involved in tRNA maturation, by removing a 3'-trailer from precursor tRNA. In Picrophilus torridus (strain ATCC 700027 / DSM 9790 / JCM 10055 / NBRC 100828 / KAW 2/3), this protein is Ribonuclease Z.